The sequence spans 815 residues: Ferripyoverdine receptor (815 aa).

Residues 1–43 (MPAPHGLSPLSKAFLMRRAFQRRILPHSLAMALSLPLAGYVQA) form the signal peptide. The 111-residue stretch at 161-271 (TPRETPQSIT…LGATINLIRK (111 aa)) folds into the TBDR plug domain. A TBDR beta-barrel domain is found at 276–815 (EFKGHVELGA…NLMFSTRWDF (540 aa)). A TonB C-terminal box motif is present at residues 798 to 815 (SASYGDPRNLMFSTRWDF).

This sequence belongs to the TonB-dependent receptor family.

It localises to the cell outer membrane. Receptor for the siderophore ferripyoverdine. The polypeptide is Ferripyoverdine receptor (fpvA) (Pseudomonas aeruginosa (strain ATCC 15692 / DSM 22644 / CIP 104116 / JCM 14847 / LMG 12228 / 1C / PRS 101 / PAO1)).